The following is a 158-amino-acid chain: Small ribosomal subunit protein uS17 (158 aa).

Ala2 carries the N-acetylalanine modification. Citrulline is present on Arg22. 3 positions are modified to N6-acetyllysine: Lys38, Lys45, and Lys58. Residue Cys60 is the site of S-palmitoyl cysteine attachment. At Ser67 the chain carries Phosphoserine. Position 69 is an omega-N-methylarginine (Arg69). Ser110 is modified (phosphoserine).

It belongs to the universal ribosomal protein uS17 family. As to quaternary structure, component of the small ribosomal subunit. Part of the small subunit (SSU) processome, composed of more than 70 proteins and the RNA chaperone small nucleolar RNA (snoRNA) U3. Post-translationally, citrullinated by PADI4.

The protein resides in the cytoplasm. It localises to the nucleus. Its subcellular location is the nucleolus. Its function is as follows. Component of the small ribosomal subunit. The ribosome is a large ribonucleoprotein complex responsible for the synthesis of proteins in the cell. Part of the small subunit (SSU) processome, first precursor of the small eukaryotic ribosomal subunit. During the assembly of the SSU processome in the nucleolus, many ribosome biogenesis factors, an RNA chaperone and ribosomal proteins associate with the nascent pre-rRNA and work in concert to generate RNA folding, modifications, rearrangements and cleavage as well as targeted degradation of pre-ribosomal RNA by the RNA exosome. This Canis lupus familiaris (Dog) protein is Small ribosomal subunit protein uS17 (RPS11).